The following is a 296-amino-acid chain: 4-hydroxybenzoate octaprenyltransferase (296 aa).

8 consecutive transmembrane segments (helical) span residues 22 to 42, 46 to 66, 99 to 121, 139 to 159, 163 to 183, 211 to 231, 238 to 258, and 270 to 290; these read PIGILLLLWPTLWALWLSALG, WIVVWIFILGTVLMRSAGCVI, LFAGLSLLSFLLVVFLGNTLVIW, FFAIPQAYLGVAFGFGIPMAY, LGEVPAEAWWLLLANVFWAVA, FDVAAVMLCYGVTLAIIGGIG, PAFYAGLAVATCIMGVHYTWI, and FLHNNWVGLSIFVGIVVDFLV.

This sequence belongs to the UbiA prenyltransferase family. It depends on Mg(2+) as a cofactor.

It is found in the cell inner membrane. The catalysed reaction is all-trans-octaprenyl diphosphate + 4-hydroxybenzoate = 4-hydroxy-3-(all-trans-octaprenyl)benzoate + diphosphate. It functions in the pathway cofactor biosynthesis; ubiquinone biosynthesis. Catalyzes the prenylation of para-hydroxybenzoate (PHB) with an all-trans polyprenyl group. Mediates the second step in the final reaction sequence of ubiquinone-8 (UQ-8) biosynthesis, which is the condensation of the polyisoprenoid side chain with PHB, generating the first membrane-bound Q intermediate 3-octaprenyl-4-hydroxybenzoate. This chain is 4-hydroxybenzoate octaprenyltransferase, found in Dechloromonas aromatica (strain RCB).